Reading from the N-terminus, the 1025-residue chain is Multidrug resistance protein MdtC (1025 aa).

Helical transmembrane passes span 3 to 23 (FFALFIYRPVATILLSVAITL), 333 to 353 (EVEQTLVISVALVILVVFLFL), 360 to 380 (IIPAVAVPVSLIGTFAAMYLC), 387 to 407 (LSLMALTIATGFVVDDAIVVL), 431 to 451 (VGFTVLSMSLSLVAVFLPLLL), 463 to 483 (FAVTLSVAIGISLLVSLTLTP), 528 to 548 (LVGAVLLGTIALNIWLYISIP), 853 to 873 (VILIIAAIATVYIVLGILYES), 875 to 895 (VHPLTILSTLPSAGVGALLAL), 897 to 917 (LFNAPFSLIALIGIMLLIGIV), 953 to 973 (PIMMTTLAALFGALPLVLSGG), and 984 to 1004 (ITIVGGLVMSQLLTLYTTPVV).

It belongs to the resistance-nodulation-cell division (RND) (TC 2.A.6) family. MdtC subfamily. Part of a tripartite efflux system composed of MdtA, MdtB and MdtC. MdtC forms a heteromultimer with MdtB.

The protein localises to the cell inner membrane. The MdtABC tripartite complex confers resistance against novobiocin and deoxycholate. The polypeptide is Multidrug resistance protein MdtC (Escherichia coli O81 (strain ED1a)).